A 372-amino-acid polypeptide reads, in one-letter code: Mitogen-activated protein kinase kinase kinase 17 (372 aa).

One can recognise a Protein kinase domain in the interval 3 to 259 (WTRGRILGRG…ATQLLNHPFL (257 aa)). Residues 9 to 17 (LGRGSTATV) and lysine 32 contribute to the ATP site. Aspartate 126 functions as the Proton acceptor in the catalytic mechanism. Position 312 is a phosphoserine (serine 312).

This sequence belongs to the protein kinase superfamily. Ser/Thr protein kinase family. In terms of assembly, binds to MKK3.

It is found in the nucleus. The catalysed reaction is L-seryl-[protein] + ATP = O-phospho-L-seryl-[protein] + ADP + H(+). It catalyses the reaction L-threonyl-[protein] + ATP = O-phospho-L-threonyl-[protein] + ADP + H(+). Its function is as follows. Component of the abscisic acid (ABA) signaling pathway that may act as ABA signal transducer in the context of abiotic stresses. Triggers MPK7 activation in a MKK3-dependent manner. Mediates the ABA-dependent activation of the MKK3-MPK7 module. The chain is Mitogen-activated protein kinase kinase kinase 17 from Arabidopsis thaliana (Mouse-ear cress).